The following is a 291-amino-acid chain: Lys-63-specific deubiquitinase BRCC36 (291 aa).

Ala-2 carries the N-acetylalanine modification. The 168-residue stretch at 12–179 (VHLESDAFLV…YTCFQSIQAQ (168 aa)) folds into the MPN domain. Zn(2+)-binding residues include His-122, His-124, and Asp-135. The JAMM motif motif lies at 122-135 (HSHPHITVWPSHVD). At Ser-233 the chain carries Phosphoserine.

The protein belongs to the peptidase M67A family. BRCC36 subfamily. Component of the ARISC complex, at least composed of UIMC1/RAP80, ABRAXAS1, BRCC3/BRCC36, BABAM2 and BABAM1/NBA1. Component of the BRCA1-A complex, at least composed of BRCA1, BARD1, UIMC1/RAP80, ABRAXAS1, BRCC3/BRCC36, BABAM2 and BABAM1/NBA1. In the BRCA1-A complex, interacts directly with ABRAXAS1 and BABAM2. Component of the BRISC complex, at least composed of ABRAXAS2, BRCC3/BRCC36, BABAM2 and BABAM1/NBA1. Identified in a complex with SHMT2 and the other subunits of the BRISC complex. In the BRISC complex, interacts directly with ABRAXAS2. Identified in a complex with ABRAXAS2 and NUMA1. The BRISC complex interacts with the CSN complex. Component of the BRCA1/BRCA2 containing complex (BRCC), which also contains BRCA1, BRCA2, BARD1, BABAM2 and RAD51. BRCC is a ubiquitin E3 ligase complex that enhances cellular survival following DNA damage. Interacts with BRCA1. Binds polyubiquitin. Interacts with PWWP2B. Interacts with HDAC1; this interaction is enhanced in the presence of PWWP2B. It depends on Zn(2+) as a cofactor.

It is found in the nucleus. The protein resides in the cytoplasm. Its subcellular location is the cytoskeleton. The protein localises to the spindle pole. In terms of biological role, metalloprotease that specifically cleaves 'Lys-63'-linked polyubiquitin chains. Does not have activity toward 'Lys-48'-linked polyubiquitin chains. Component of the BRCA1-A complex, a complex that specifically recognizes 'Lys-63'-linked ubiquitinated histones H2A and H2AX at DNA lesions sites, leading to target the BRCA1-BARD1 heterodimer to sites of DNA damage at double-strand breaks (DSBs). In the BRCA1-A complex, it specifically removes 'Lys-63'-linked ubiquitin on histones H2A and H2AX, antagonizing the RNF8-dependent ubiquitination at double-strand breaks (DSBs). Catalytic subunit of the BRISC complex, a multiprotein complex that specifically cleaves 'Lys-63'-linked ubiquitin in various substrates. Mediates the specific 'Lys-63'-specific deubiquitination associated with the COP9 signalosome complex (CSN), via the interaction of the BRISC complex with the CSN complex. The BRISC complex is required for normal mitotic spindle assembly and microtubule attachment to kinetochores via its role in deubiquitinating NUMA1. Plays a role in interferon signaling via its role in the deubiquitination of the interferon receptor IFNAR1; deubiquitination increases IFNAR1 activity by enhancing its stability and cell surface expression. Acts as a regulator of the NLRP3 inflammasome by mediating deubiquitination of NLRP3, leading to NLRP3 inflammasome assembly. Down-regulates the response to bacterial lipopolysaccharide (LPS) via its role in IFNAR1 deubiquitination. Deubiquitinates HDAC1 and PWWP2B leading to their stabilization. This chain is Lys-63-specific deubiquitinase BRCC36 (Brcc3), found in Mus musculus (Mouse).